The chain runs to 150 residues: C-type lectin 16 (150 aa).

Residues 1 to 27 form the signal peptide; sequence MKRVRVKVIFVSFGLLVVFLSLSGTAA. Cystine bridges form between C29–C40, C57–C146, and C123–C138. Residues 36–147 form the C-type lectin domain; sequence YEGHCYKPFN…CRMLARFVCE (112 aa).

Belongs to the snaclec family. In terms of assembly, heteromultimer; disulfide-linked. In terms of tissue distribution, expressed by the venom gland.

It is found in the secreted. Its function is as follows. Interferes with one step of hemostasis (modulation of platelet aggregation, or coagulation cascade, for example). This is C-type lectin 16 from Crotalus adamanteus (Eastern diamondback rattlesnake).